The sequence spans 559 residues: Glutamine--tRNA ligase (559 aa).

Positions 36-46 (PEPNGYLHLGH) match the 'HIGH' region motif. Residues 37–39 (EPN) and 43–49 (HLGHAKS) contribute to the ATP site. Residues D69 and Y214 each contribute to the L-glutamine site. ATP is bound by residues T233, 263–264 (RL), and 271–273 (LSK). Residues 270-274 (LLSKR) carry the 'KMSKS' region motif.

It belongs to the class-I aminoacyl-tRNA synthetase family. In terms of assembly, monomer.

The protein resides in the cytoplasm. The enzyme catalyses tRNA(Gln) + L-glutamine + ATP = L-glutaminyl-tRNA(Gln) + AMP + diphosphate. The polypeptide is Glutamine--tRNA ligase (Nitrobacter winogradskyi (strain ATCC 25391 / DSM 10237 / CIP 104748 / NCIMB 11846 / Nb-255)).